A 240-amino-acid chain; its full sequence is Probable peptide export permease protein YydJ (240 aa).

6 consecutive transmembrane segments (helical) span residues 13-33 (VIIILGAMFVFLFLLGYFLLV), 50-70 (SYTVATQFGLMLFSFVIAFFI), 97-117 (IAVLFLECFAFITLGLLIISL), 126-146 (ALLLFLFSAVILQYILIIGTI), 153-173 (ILISIGVSIVYWMTSVILVAI), and 210-230 (VLFIILYLVSIIIINAIVLRF).

The complex is composed of 2 ATP-binding proteins (YydI), two transmembrane proteins (YydJ).

It localises to the cell membrane. Functionally, suggested to be part of an ABC transporter complex YydIJ involved in export of the modified peptide YydF. The protein is Probable peptide export permease protein YydJ (yydJ) of Bacillus subtilis (strain 168).